The following is a 187-amino-acid chain: Aminodeoxychorismate synthase component 2 (187 aa).

Residues M1 to R187 form the Glutamine amidotransferase type-1 domain. Residues C79, H168, and E170 contribute to the active site.

In terms of assembly, monomer. Heterodimer consisting of two non-identical subunits: a glutamine amidotransferase subunit (PabA) and a aminodeoxychorismate synthase subunit (PabB).

It catalyses the reaction chorismate + L-glutamine = 4-amino-4-deoxychorismate + L-glutamate. It participates in cofactor biosynthesis; tetrahydrofolate biosynthesis; 4-aminobenzoate from chorismate: step 1/2. Its function is as follows. Part of a heterodimeric complex that catalyzes the two-step biosynthesis of 4-amino-4-deoxychorismate (ADC), a precursor of p-aminobenzoate (PABA) and tetrahydrofolate. In the first step, a glutamine amidotransferase (PabA) generates ammonia as a substrate that, along with chorismate, is used in the second step, catalyzed by aminodeoxychorismate synthase (PabB) to produce ADC. PabA converts glutamine into glutamate only in the presence of stoichiometric amounts of PabB. The sequence is that of Aminodeoxychorismate synthase component 2 (pabA) from Klebsiella aerogenes (Enterobacter aerogenes).